We begin with the raw amino-acid sequence, 310 residues long: Ribosomal RNA small subunit methyltransferase H (310 aa).

Residues 33–35 (GGH), aspartate 52, phenylalanine 79, aspartate 98, and glutamine 105 contribute to the S-adenosyl-L-methionine site.

The protein belongs to the methyltransferase superfamily. RsmH family.

Its subcellular location is the cytoplasm. The enzyme catalyses cytidine(1402) in 16S rRNA + S-adenosyl-L-methionine = N(4)-methylcytidine(1402) in 16S rRNA + S-adenosyl-L-homocysteine + H(+). Specifically methylates the N4 position of cytidine in position 1402 (C1402) of 16S rRNA. This is Ribosomal RNA small subunit methyltransferase H from Campylobacter jejuni subsp. doylei (strain ATCC BAA-1458 / RM4099 / 269.97).